A 442-amino-acid chain; its full sequence is 3-phosphoshikimate 1-carboxyvinyltransferase (442 aa).

Positions 25, 26, and 30 each coordinate 3-phosphoshikimate. Residue Lys-25 coordinates phosphoenolpyruvate. Residues Gly-97 and Arg-125 each contribute to the phosphoenolpyruvate site. 3-phosphoshikimate-binding residues include Ser-170, Ser-171, Gln-172, Asp-323, and Lys-350. Gln-172 is a binding site for phosphoenolpyruvate. Asp-323 functions as the Proton acceptor in the catalytic mechanism. The phosphoenolpyruvate site is built by Arg-354 and Arg-399.

It belongs to the EPSP synthase family. In terms of assembly, monomer.

Its subcellular location is the cytoplasm. The catalysed reaction is 3-phosphoshikimate + phosphoenolpyruvate = 5-O-(1-carboxyvinyl)-3-phosphoshikimate + phosphate. It participates in metabolic intermediate biosynthesis; chorismate biosynthesis; chorismate from D-erythrose 4-phosphate and phosphoenolpyruvate: step 6/7. Catalyzes the transfer of the enolpyruvyl moiety of phosphoenolpyruvate (PEP) to the 5-hydroxyl of shikimate-3-phosphate (S3P) to produce enolpyruvyl shikimate-3-phosphate and inorganic phosphate. The protein is 3-phosphoshikimate 1-carboxyvinyltransferase of Bartonella tribocorum (strain CIP 105476 / IBS 506).